The chain runs to 547 residues: RNA polymerase sigma factor sigF, chloroplastic (547 aa).

Over residues 1 to 17 (MEATRNLVSSSPSFQTK) the composition is skewed to polar residues. Disordered regions lie at residues 1 to 28 (MEAT…SSPS) and 54 to 79 (FPAS…DDRT). The transit peptide at 1-55 (MEATRNLVSSSPSFQTKTHLKSSYSSPSSVVMLHDQTTTPVVNSRHLNSLSRHFP) directs the protein to the chloroplast. Residues 62–79 (EPREESRPLSHALRDDRT) show a composition bias toward basic and acidic residues. Residues serine 94, serine 95, serine 174, serine 176, serine 177, and serine 180 each carry the phosphoserine; by CK2 modification. A disordered region spans residues 163 to 226 (ANPSDNIKDS…QKTSAKKKYK (64 aa)). Residues 172 to 181 (SLSTSSSMSL) are compositionally biased toward low complexity. Threonine 249 is subject to Phosphothreonine; by CK2. The Polymerase core binding signature appears at 335-348 (DLLQEGSMGLMKSV). A DNA-binding region (H-T-H motif) is located at residues 505-524 (LSEIGEIYGLSKERVRQLES).

The protein belongs to the sigma-70 factor family. Interacts (via N-terminus) with DG1 (via C-terminus). In terms of processing, phosphorylated to acquire sigma activity; site-specific phosphorylation regulates promoter affinity. Phosphorylation at Ser-174 by chloroplastic CK2 requires prior phosphorylation at Ser-177. Phosphorylation at either Ser-94, Ser-95 or Ser-174 is required for sigma activation. In terms of tissue distribution, expressed in seedling, accumulating progressively. Present in leaves but not in roots.

The protein resides in the plastid. Its subcellular location is the chloroplast. Its function is as follows. Sigma factors are initiation factors that promote the attachment of plastid-encoded RNA polymerase (PEP) to specific initiation sites and are then released. Regulates transcription in chloroplast in a DG1-dependent manner. Involved in light-dependent chloroplast development. Required during early plant development and primary leaf formation. The polypeptide is RNA polymerase sigma factor sigF, chloroplastic (SIGF) (Arabidopsis thaliana (Mouse-ear cress)).